We begin with the raw amino-acid sequence, 218 residues long: Cytochrome b6 (218 aa).

A helical membrane pass occupies residues 35–55 (IFYCLGGITLVCFLIQFATGF). Residue Cys-38 participates in heme c binding. Positions 89 and 103 each coordinate heme b. The next 3 helical transmembrane spans lie at 93 to 113 (ASMM…TGGF), 119 to 139 (LTWV…VTGY), and 189 to 209 (LHTF…FLMI). Heme b-binding residues include His-190 and His-205.

This sequence belongs to the cytochrome b family. PetB subfamily. In terms of assembly, the 4 large subunits of the cytochrome b6-f complex are cytochrome b6, subunit IV (17 kDa polypeptide, PetD), cytochrome f and the Rieske protein, while the 4 small subunits are PetG, PetL, PetM and PetN. The complex functions as a dimer. Heme b is required as a cofactor. It depends on heme c as a cofactor.

The protein resides in the cellular thylakoid membrane. Functionally, component of the cytochrome b6-f complex, which mediates electron transfer between photosystem II (PSII) and photosystem I (PSI), cyclic electron flow around PSI, and state transitions. This Synechococcus sp. (strain CC9902) protein is Cytochrome b6.